Consider the following 270-residue polypeptide: 3-methyl-2-oxobutanoate hydroxymethyltransferase (270 aa).

Mg(2+) contacts are provided by D50 and D89. Residues 50-51 (DS), D89, and K118 each bind 3-methyl-2-oxobutanoate. E120 is a binding site for Mg(2+). E187 acts as the Proton acceptor in catalysis.

This sequence belongs to the PanB family. Homodecamer; pentamer of dimers. Requires Mg(2+) as cofactor.

The protein localises to the cytoplasm. The enzyme catalyses 3-methyl-2-oxobutanoate + (6R)-5,10-methylene-5,6,7,8-tetrahydrofolate + H2O = 2-dehydropantoate + (6S)-5,6,7,8-tetrahydrofolate. It participates in cofactor biosynthesis; (R)-pantothenate biosynthesis; (R)-pantoate from 3-methyl-2-oxobutanoate: step 1/2. Its function is as follows. Catalyzes the reversible reaction in which hydroxymethyl group from 5,10-methylenetetrahydrofolate is transferred onto alpha-ketoisovalerate to form ketopantoate. The polypeptide is 3-methyl-2-oxobutanoate hydroxymethyltransferase (Helicobacter pylori (strain ATCC 700392 / 26695) (Campylobacter pylori)).